Here is a 248-residue protein sequence, read N- to C-terminus: ATP synthase subunit a, chloroplastic (248 aa).

The next 5 membrane-spanning stretches (helical) occupy residues 35–55 (GQVF…AIAG), 94–114 (IPYI…GALI), 133–153 (INTT…AGLS), 202–222 (VFTL…GLFA), and 224–244 (SIQA…ALEG).

This sequence belongs to the ATPase A chain family. F-type ATPases have 2 components, CF(1) - the catalytic core - and CF(0) - the membrane proton channel. CF(1) has five subunits: alpha(3), beta(3), gamma(1), delta(1), epsilon(1). CF(0) has four main subunits: a, b, b' and c.

It is found in the plastid. The protein resides in the chloroplast thylakoid membrane. Functionally, key component of the proton channel; it plays a direct role in the translocation of protons across the membrane. The protein is ATP synthase subunit a, chloroplastic of Antithamnion sp. (Red alga).